The chain runs to 883 residues: Protein P (883 aa).

Residues 1 to 183 (MHPFSRLFRN…GKPYSWEHRQ (183 aa)) are terminal protein domain (TP). Residues 184–386 (LVQHNGQQHK…YCIHHIVSSL (203 aa)) are spacer. The interval 298 to 344 (RNSGHTTWFSSASNSNKSRSREKAYSSNSTSKRYSPPLNYEKSDFSS) is disordered. The interval 387-728 (DDWGPCTVTG…YEELWPVVRQ (342 aa)) is polymerase/reverse transcriptase domain (RT). Residues 397–638 (DVTIKSPRTP…NHLHFMGYVI (242 aa)) form the Reverse transcriptase domain. Mg(2+) is bound by residues aspartate 469, aspartate 589, and aspartate 590.

The protein belongs to the hepadnaviridae P protein family.

The enzyme catalyses DNA(n) + a 2'-deoxyribonucleoside 5'-triphosphate = DNA(n+1) + diphosphate. It carries out the reaction Endonucleolytic cleavage to 5'-phosphomonoester.. Its activity is regulated as follows. Activated by host HSP70 and HSP40 in vitro to be able to bind the epsilon loop of the pgRNA. Because deletion of the RNase H region renders the protein partly chaperone-independent, the chaperones may be needed indirectly to relieve occlusion of the RNA-binding site by this domain. Inhibited by several reverse-transcriptase inhibitors: Lamivudine, Adefovir and Entecavir. In terms of biological role, multifunctional enzyme that converts the viral RNA genome into dsDNA in viral cytoplasmic capsids. This enzyme displays a DNA polymerase activity that can copy either DNA or RNA templates, and a ribonuclease H (RNase H) activity that cleaves the RNA strand of RNA-DNA heteroduplexes in a partially processive 3'- to 5'-endonucleasic mode. Neo-synthesized pregenomic RNA (pgRNA) are encapsidated together with the P protein, and reverse-transcribed inside the nucleocapsid. Initiation of reverse-transcription occurs first by binding the epsilon loop on the pgRNA genome, and is initiated by protein priming, thereby the 5'-end of (-)DNA is covalently linked to P protein. Partial (+)DNA is synthesized from the (-)DNA template and generates the relaxed circular DNA (RC-DNA) genome. After budding and infection, the RC-DNA migrates in the nucleus, and is converted into a plasmid-like covalently closed circular DNA (cccDNA). The activity of P protein does not seem to be necessary for cccDNA generation, and is presumably released from (+)DNA by host nuclear DNA repair machinery. The sequence is that of Protein P from Woodchuck hepatitis B virus (isolate 2) (WHV).